An 848-amino-acid polypeptide reads, in one-letter code: Leucine--tRNA ligase (848 aa).

The segment at 1–21 (MTENTPGTSAPERFDPATADT) is disordered. The 'HIGH' region motif lies at 51-61 (PYPSGRIHIGH). The 'KMSKS' region signature appears at 625 to 629 (KMSKS). Lysine 628 is a binding site for ATP.

Belongs to the class-I aminoacyl-tRNA synthetase family.

It localises to the cytoplasm. It carries out the reaction tRNA(Leu) + L-leucine + ATP = L-leucyl-tRNA(Leu) + AMP + diphosphate. In Novosphingobium aromaticivorans (strain ATCC 700278 / DSM 12444 / CCUG 56034 / CIP 105152 / NBRC 16084 / F199), this protein is Leucine--tRNA ligase.